We begin with the raw amino-acid sequence, 182 residues long: Large ribosomal subunit protein uL6 (182 aa).

The protein belongs to the universal ribosomal protein uL6 family. Part of the 50S ribosomal subunit.

Functionally, this protein binds to the 23S rRNA, and is important in its secondary structure. It is located near the subunit interface in the base of the L7/L12 stalk, and near the tRNA binding site of the peptidyltransferase center. The sequence is that of Large ribosomal subunit protein uL6 from Methanocaldococcus jannaschii (strain ATCC 43067 / DSM 2661 / JAL-1 / JCM 10045 / NBRC 100440) (Methanococcus jannaschii).